A 630-amino-acid chain; its full sequence is Low affinity heme transporter str3 (630 aa).

A compositionally biased stretch (basic and acidic residues) spans 1–26; it reads MEAKETHSISDHEVELQDAKPEEKSE. Positions 1–51 are disordered; sequence MEAKETHSISDHEVELQDAKPEEKSENGNFVFEKAFSSDEEKGSGYNTNET. Topologically, residues 1–79 are cytoplasmic; sequence MEAKETHSIS…VRDSIYQNKR (79 aa). 2 positions are modified to phosphoserine: Ser-10 and Ser-38. Residues 80 to 100 form a helical membrane-spanning segment; it reads GMYLAYAFGIAILACSWASAI. Residues 101–120 are Extracellular-facing; that stretch reads QSSTTYSYQVYATASFNRTS. A helical membrane pass occupies residues 121–141; sequence MISTLEIATAIISSVCKPILG. Topologically, residues 142-154 are cytoplasmic; the sequence is KFSDITSRPMTYT. A helical transmembrane segment spans residues 155–175; sequence LVLLFYVIGFIVVASSSTISA. Residue Tyr-176 is a topological domain, extracellular. Residues 177–197 form a helical membrane-spanning segment; it reads VIGSVFISIGSSGLDYLNTLV. Topologically, residues 198–208 are cytoplasmic; it reads VGDLTSLKWRG. A helical transmembrane segment spans residues 209-229; it reads FMTALLSTPYIATVWFTGFIV. At 230-241 the chain is on the extracellular side; it reads QGIIDSNWRWGY. A helical transmembrane segment spans residues 242-262; that stretch reads GMFAIIMPAVMTPAVIILMYL. Topologically, residues 263 to 302 are cytoplasmic; the sequence is ERQANKDENIKKIINYQTEEKNKNKQSKWQKLWKAVLEVD. The helical transmembrane segment at 303-323 threads the bilayer; sequence LFGLILLGVGWSILLLPFSLT. Topologically, residues 324-335 are extracellular; the sequence is SYAKNGWKNPSM. A helical transmembrane segment spans residues 336-356; the sequence is IAMMVVGGVILIAYSGYEMFI. The Cytoplasmic segment spans residues 357 to 370; that stretch reads APYPSCPRRVMNRT. Residues 371 to 391 traverse the membrane as a helical segment; it reads FITAVIIDFFYYLAGYLQSMY. Over 392-406 the chain is Extracellular; sequence FTTYTWILYDWSYRD. Residues 407 to 427 traverse the membrane as a helical segment; it reads WTYFNNTMTIALCVFGVFAGA. Residues 428 to 439 are Cytoplasmic-facing; that stretch reads MHRVFHRYKYLQ. Residues 440 to 460 traverse the membrane as a helical segment; the sequence is IIGLVIKIVGYGILIRPNFAA. Residues 461–465 are Extracellular-facing; that stretch reads TGKVD. The helical transmembrane segment at 466–486 threads the bilayer; that stretch reads LAWSLILIGMGGSFSVVGSQV. The Cytoplasmic portion of the chain corresponds to 487–502; the sequence is SCQASVPHQDLAIASS. Residues 503-523 form a helical membrane-spanning segment; that stretch reads LLPLYTNIGGAIGAAIASPIF. The segment at 522-576 is heme binding; the sequence is IFSNKVPKYLREYLPSSINDTQVYNFYSDSSLIREYPVGTEIRDGAIKAYSRSMF. At 524-574 the chain is on the extracellular side; the sequence is SNKVPKYLREYLPSSINDTQVYNFYSDSSLIREYPVGTEIRDGAIKAYSRS. A helical transmembrane segment spans residues 575-595; that stretch reads MFFLLVPAVSLSFIPLAAAFW. At 596–630 the chain is on the cytoplasmic side; it reads QSNFYLGNQQNAVEGDQDHKKKGDKETTQEEKIII. The tract at residues 610–630 is disordered; sequence GDQDHKKKGDKETTQEEKIII. Residues 611-630 are compositionally biased toward basic and acidic residues; it reads DQDHKKKGDKETTQEEKIII.

Belongs to the major facilitator superfamily.

It localises to the cell membrane. In terms of biological role, low affinity heme transporter involved in the assimilation of exogenous heme during conditions of low cellular iron. This Schizosaccharomyces pombe (strain 972 / ATCC 24843) (Fission yeast) protein is Low affinity heme transporter str3.